Here is a 333-residue protein sequence, read N- to C-terminus: Na(+)-translocating ferredoxin:NAD(+) oxidoreductase complex subunit B (333 aa).

Positions 1 to 27 (MLNAILVPVGILGVFGLIFGIGLAIAA) are hydrophobic. The 4Fe-4S domain maps to 33 to 92 (YEDPRVPLVRAALPGANCGGCGLPGCDALAANIVGGSAAIDACPVGGASCAAAVAEIMGM). Residues Cys50, Cys53, Cys58, Cys75, Cys138, Cys142, Cys148, Cys152, Cys172, Cys175, Cys178, Cys182, Cys217, Cys220, Cys223, Cys227, Cys246, Cys249, Cys252, Cys256, Cys279, Cys282, Cys285, Cys289, Cys310, Cys313, Cys316, and Cys320 each coordinate [4Fe-4S] cluster. 4Fe-4S ferredoxin-type domains are found at residues 126–162 (REAMIASGGSKGCRYGCLGYGTCKAVCPFDAIVIGED), 163–192 (GLPKVDPEKCTSCGKCVEACPKSIMTLVPE), 207–237 (KIARLSCTTACIACGACVKACRFDAITVENN), 239–266 (AKIDYDKCRQCYECVDKCPMNCISGDVE), 270–299 (STAYIIEENCIACGLCAKNCPVNAITGEIK), and 301–330 (PPYVIDHDMCIGCGICFDKCRKSAIEMRPN).

This sequence belongs to the 4Fe4S bacterial-type ferredoxin family. RnfB subfamily. In terms of assembly, the complex is composed of six subunits: RnfA, RnfB, RnfC, RnfD, RnfE and RnfG. [4Fe-4S] cluster is required as a cofactor.

It is found in the cell membrane. It carries out the reaction 2 reduced [2Fe-2S]-[ferredoxin] + Na(+)(in) + NAD(+) + H(+) = 2 oxidized [2Fe-2S]-[ferredoxin] + Na(+)(out) + NADH. In terms of biological role, part of a membrane-bound complex that couples electron transfer with translocation of ions across the membrane. Couples electron transfer from reduced ferredoxin to NAD(+) with electrogenic movement of Na(+) out of the cell. Involved in caffeate respiration. This Acetobacterium woodii (strain ATCC 29683 / DSM 1030 / JCM 2381 / KCTC 1655 / WB1) protein is Na(+)-translocating ferredoxin:NAD(+) oxidoreductase complex subunit B.